The following is a 372-amino-acid chain: GDSL esterase/lipase At1g54020 (372 aa).

A signal peptide spans 1–26 (MECSSVSVLGILLVFPLLHNLVTISG). The active-site Nucleophile is S40. Residues N161 and N280 are each glycosylated (N-linked (GlcNAc...) asparagine). Active-site residues include D314 and H317.

The protein belongs to the 'GDSL' lipolytic enzyme family.

Its subcellular location is the secreted. This Arabidopsis thaliana (Mouse-ear cress) protein is GDSL esterase/lipase At1g54020.